The primary structure comprises 133 residues: Holo-[acyl-carrier-protein] synthase (133 aa).

The Mg(2+) site is built by D8 and E56.

It belongs to the P-Pant transferase superfamily. AcpS family. Mg(2+) is required as a cofactor.

It is found in the cytoplasm. It catalyses the reaction apo-[ACP] + CoA = holo-[ACP] + adenosine 3',5'-bisphosphate + H(+). Transfers the 4'-phosphopantetheine moiety from coenzyme A to a Ser of acyl-carrier-protein. The protein is Holo-[acyl-carrier-protein] synthase of Clostridium perfringens (strain 13 / Type A).